Consider the following 101-residue polypeptide: Protein Tat (101 aa).

The span at 1 to 10 (MEPVDPRLEP) shows a compositional bias: basic and acidic residues. Residues 1 to 20 (MEPVDPRLEPWNHPGSQPKT) are disordered. The tract at residues 1–24 (MEPVDPRLEPWNHPGSQPKTACNN) is interaction with human CREBBP. The transactivation stretch occupies residues 1 to 48 (MEPVDPRLEPWNHPGSQPKTACNNCYCKRCCYHCLYCFTKKGLGISYG). The Zn(2+) site is built by cysteine 22, cysteine 25, and cysteine 27. A cysteine-rich region spans residues 22–37 (CNNCYCKRCCYHCLYC). Position 28 is an N6-acetyllysine; by host PCAF (lysine 28). Cysteine 30, histidine 33, cysteine 34, and cysteine 37 together coordinate Zn(2+). The interval 38-48 (FTKKGLGISYG) is core. The span at 48 to 58 (GRKKRSQRRRT) shows a compositional bias: basic residues. A disordered region spans residues 48-101 (GRKKRSQRRRTPQSSKSHQDLIPEQPLSQQQGDQTGQKKQKEALESKTEADPCD). Positions 49-57 (RKKRSQRRR) match the Nuclear localization signal, RNA-binding (TAR), and protein transduction motif. The interval 49–86 (RKKRSQRRRTPQSSKSHQDLIPEQPLSQQQGDQTGQKK) is interaction with the host capping enzyme RNGTT. An N6-acetyllysine; by host EP300 and GCN5L2 mark is found at lysine 50 and lysine 51. The residue at position 52 (arginine 52) is an Asymmetric dimethylarginine; by host PRMT6. Residues 86-101 (KQKEALESKTEADPCD) show a composition bias toward basic and acidic residues.

The protein belongs to the lentiviruses Tat family. As to quaternary structure, interacts with host CCNT1. Associates with the P-TEFb complex composed at least of Tat, P-TEFb (CDK9 and CCNT1), TAR RNA, RNA Pol II. Recruits the HATs CREBBP, TAF1/TFIID, EP300, PCAF and GCN5L2. Interacts with host KAT5/Tip60; this interaction targets the latter to degradation. Interacts with the host deacetylase SIRT1. Interacts with host capping enzyme RNGTT; this interaction stimulates RNGTT. Binds to host KDR, and to the host integrins ITGAV/ITGB3 and ITGA5/ITGB1. Interacts with host KPNB1/importin beta-1 without previous binding to KPNA1/importin alpha-1. Interacts with EIF2AK2. Interacts with host nucleosome assembly protein NAP1L1; this interaction may be required for the transport of Tat within the nucleus, since the two proteins interact at the nuclear rim. Interacts with host C1QBP/SF2P32; this interaction involves lysine-acetylated Tat. Interacts with the host chemokine receptors CCR2, CCR3 and CXCR4. Interacts with host DPP4/CD26; this interaction may trigger an anti-proliferative effect. Interacts with host LDLR. Interacts with the host extracellular matrix metalloproteinase MMP1. Interacts with host PRMT6; this interaction mediates Tat's methylation. Interacts with, and is ubiquitinated by MDM2/Hdm2. Interacts with host PSMC3 and HTATIP2. Interacts with STAB1; this interaction may overcome SATB1-mediated repression of IL2 and IL2RA (interleukin) in T cells by binding to the same domain than HDAC1. Interacts (when acetylated) with human CDK13, thereby increasing HIV-1 mRNA splicing and promoting the production of the doubly spliced HIV-1 protein Nef. Interacts with host TBP; this interaction modulates the activity of transcriptional pre-initiation complex. Interacts with host RELA. Interacts with host PLSCR1; this interaction negatively regulates Tat transactivation activity by altering its subcellular distribution. Asymmetrical arginine methylation by host PRMT6 seems to diminish the transactivation capacity of Tat and affects the interaction with host CCNT1. In terms of processing, acetylation by EP300, CREBBP, GCN5L2/GCN5 and PCAF regulates the transactivation activity of Tat. EP300-mediated acetylation of Lys-50 promotes dissociation of Tat from the TAR RNA through the competitive binding to PCAF's bromodomain. In addition, the non-acetylated Tat's N-terminus can also interact with PCAF. PCAF-mediated acetylation of Lys-28 enhances Tat's binding to CCNT1. Lys-50 is deacetylated by SIRT1. Post-translationally, polyubiquitination by host MDM2 does not target Tat to degradation, but activates its transactivation function and fosters interaction with CCNT1 and TAR RNA. Phosphorylated by EIF2AK2 on serine and threonine residues adjacent to the basic region important for TAR RNA binding and function. Phosphorylation of Tat by EIF2AK2 is dependent on the prior activation of EIF2AK2 by dsRNA.

The protein resides in the host nucleus. It localises to the host nucleolus. The protein localises to the host cytoplasm. It is found in the secreted. Transcriptional activator that increases RNA Pol II processivity, thereby increasing the level of full-length viral transcripts. Recognizes a hairpin structure at the 5'-LTR of the nascent viral mRNAs referred to as the transactivation responsive RNA element (TAR) and recruits the cyclin T1-CDK9 complex (P-TEFb complex) that will in turn hyperphosphorylate the RNA polymerase II to allow efficient elongation. The CDK9 component of P-TEFb and other Tat-activated kinases hyperphosphorylate the C-terminus of RNA Pol II that becomes stabilized and much more processive. Other factors such as HTATSF1/Tat-SF1, SUPT5H/SPT5, and HTATIP2 are also important for Tat's function. Besides its effect on RNA Pol II processivity, Tat induces chromatin remodeling of proviral genes by recruiting the histone acetyltransferases (HATs) CREBBP, EP300 and PCAF to the chromatin. This also contributes to the increase in proviral transcription rate, especially when the provirus integrates in transcriptionally silent region of the host genome. To ensure maximal activation of the LTR, Tat mediates nuclear translocation of NF-kappa-B by interacting with host RELA. Through its interaction with host TBP, Tat may also modulate transcription initiation. Tat can reactivate a latently infected cell by penetrating in it and transactivating its LTR promoter. In the cytoplasm, Tat is thought to act as a translational activator of HIV-1 mRNAs. Functionally, extracellular circulating Tat can be endocytosed by surrounding uninfected cells via the binding to several surface receptors such as CD26, CXCR4, heparan sulfate proteoglycans (HSPG) or LDLR. Neurons are rarely infected, but they internalize Tat via their LDLR. Through its interaction with nuclear HATs, Tat is potentially able to control the acetylation-dependent cellular gene expression. Modulates the expression of many cellular genes involved in cell survival, proliferation or in coding for cytokines or cytokine receptors. Tat plays a role in T-cell and neurons apoptosis. Tat induced neurotoxicity and apoptosis probably contribute to neuroAIDS. Circulating Tat also acts as a chemokine-like and/or growth factor-like molecule that binds to specific receptors on the surface of the cells, affecting many cellular pathways. In the vascular system, Tat binds to ITGAV/ITGB3 and ITGA5/ITGB1 integrins dimers at the surface of endothelial cells and competes with bFGF for heparin-binding sites, leading to an excess of soluble bFGF. In Homo sapiens (Human), this protein is Protein Tat.